The chain runs to 407 residues: Multifunctional CCA protein (407 aa).

2 residues coordinate ATP: Gly8 and Arg11. CTP contacts are provided by Gly8 and Arg11. Mg(2+)-binding residues include Asp21 and Asp23. Arg91, Arg137, and Arg140 together coordinate ATP. Residues Arg91, Arg137, and Arg140 each contribute to the CTP site. The 102-residue stretch at 228-329 (TGIHTLLVAE…VKIFNKLDVW (102 aa)) folds into the HD domain.

This sequence belongs to the tRNA nucleotidyltransferase/poly(A) polymerase family. Bacterial CCA-adding enzyme type 1 subfamily. Monomer. Can also form homodimers and oligomers. Mg(2+) is required as a cofactor. Ni(2+) serves as cofactor.

The catalysed reaction is a tRNA precursor + 2 CTP + ATP = a tRNA with a 3' CCA end + 3 diphosphate. It carries out the reaction a tRNA with a 3' CCA end + 2 CTP + ATP = a tRNA with a 3' CCACCA end + 3 diphosphate. Its function is as follows. Catalyzes the addition and repair of the essential 3'-terminal CCA sequence in tRNAs without using a nucleic acid template. Adds these three nucleotides in the order of C, C, and A to the tRNA nucleotide-73, using CTP and ATP as substrates and producing inorganic pyrophosphate. tRNA 3'-terminal CCA addition is required both for tRNA processing and repair. Also involved in tRNA surveillance by mediating tandem CCA addition to generate a CCACCA at the 3' terminus of unstable tRNAs. While stable tRNAs receive only 3'-terminal CCA, unstable tRNAs are marked with CCACCA and rapidly degraded. The chain is Multifunctional CCA protein from Vibrio vulnificus (strain CMCP6).